Reading from the N-terminus, the 153-residue chain is Large ribosomal subunit protein uL22 (153 aa).

The protein belongs to the universal ribosomal protein uL22 family. Part of the 50S ribosomal subunit.

This protein binds specifically to 23S rRNA. It makes multiple contacts with different domains of the 23S rRNA in the assembled 50S subunit and ribosome. Its function is as follows. The globular domain of the protein is located near the polypeptide exit tunnel on the outside of the subunit, while an extended beta-hairpin is found that lines the wall of the exit tunnel in the center of the 70S ribosome. This is Large ribosomal subunit protein uL22 from Methanoculleus marisnigri (strain ATCC 35101 / DSM 1498 / JR1).